The following is a 359-amino-acid chain: Cyclin puc1 (359 aa).

The protein belongs to the cyclin family.

Its function is as follows. Function in exit from the mitotic cycle. Contributes to negative regulation of the timing of sexual development in fission yeast, and functions at the transition between cycling and non-cycling cells. Interacts with protein kinase A. This Schizosaccharomyces pombe (strain 972 / ATCC 24843) (Fission yeast) protein is Cyclin puc1 (puc1).